Consider the following 116-residue polypeptide: UPF0102 protein Neut_1662 (116 aa).

The protein belongs to the UPF0102 family.

This is UPF0102 protein Neut_1662 from Nitrosomonas eutropha (strain DSM 101675 / C91 / Nm57).